Reading from the N-terminus, the 525-residue chain is Peptide chain release factor 3 (525 aa).

The 268-residue stretch at 9–276 (AKRRTFAIIS…GFTRYAPAPQ (268 aa)) folds into the tr-type G domain. Residues 18-25 (SHPDAGKT), 86-90 (DTPGH), and 140-143 (NKFD) contribute to the GTP site.

Belongs to the TRAFAC class translation factor GTPase superfamily. Classic translation factor GTPase family. PrfC subfamily.

Its subcellular location is the cytoplasm. Functionally, increases the formation of ribosomal termination complexes and stimulates activities of RF-1 and RF-2. It binds guanine nucleotides and has strong preference for UGA stop codons. It may interact directly with the ribosome. The stimulation of RF-1 and RF-2 is significantly reduced by GTP and GDP, but not by GMP. The chain is Peptide chain release factor 3 from Francisella tularensis subsp. novicida (strain U112).